Reading from the N-terminus, the 200-residue chain is Probable GTP-binding protein EngB (200 aa).

Positions 22-197 (DLPEIAFAGR…WQAIQDAVEE (176 aa)) constitute an EngB-type G domain. Residues 30 to 37 (GRSNVGKS), 57 to 61 (GRTQL), 78 to 81 (DLPG), 145 to 148 (TKCD), and 176 to 178 (FSA) contribute to the GTP site. 2 residues coordinate Mg(2+): Ser-37 and Thr-59.

This sequence belongs to the TRAFAC class TrmE-Era-EngA-EngB-Septin-like GTPase superfamily. EngB GTPase family. The cofactor is Mg(2+).

Its function is as follows. Necessary for normal cell division and for the maintenance of normal septation. This is Probable GTP-binding protein EngB from Trichlorobacter lovleyi (strain ATCC BAA-1151 / DSM 17278 / SZ) (Geobacter lovleyi).